Consider the following 553-residue polypeptide: Undecaprenyl phosphate-alpha-4-amino-4-deoxy-L-arabinose arabinosyl transferase 2 (553 aa).

12 consecutive transmembrane segments (helical) span residues 6 to 26, 85 to 105, 115 to 135, 137 to 157, 178 to 198, 208 to 228, 261 to 281, 295 to 315, 317 to 337, 352 to 372, 386 to 406, and 410 to 430; these read ASKIGAILLALFFVLTYLFPL, FAVRFGSVISILLSALLIYLL, VAFVASLIYLSMFLVFSVGTY, VLDPMLALWVTASMVCCFWAL, MAFMTKGFLALAIPVIVMIPV, MLLYGVLAVLSAALISLPWVL, FWYYIPIILLGVIPWLGLLPG, ELFFLLCWFVVPFLFFSIAKG, LPTYMLPFMGPLAMLMAKYGV, GYINIFIGVAAVVAILIIQLV, WVLAIVAFSLWGIIGYLCSTL, and HWLWAASCSLGVSLCIGQAIP.

It belongs to the glycosyltransferase 83 family.

It localises to the cell inner membrane. It catalyses the reaction 4-amino-4-deoxy-alpha-L-arabinopyranosyl di-trans,octa-cis-undecaprenyl phosphate + lipid IVA = lipid IIA + di-trans,octa-cis-undecaprenyl phosphate.. It functions in the pathway lipopolysaccharide metabolism; 4-amino-4-deoxy-beta-L-arabinose-lipid A biosynthesis. Catalyzes the transfer of the L-Ara4N moiety of the glycolipid undecaprenyl phosphate-alpha-L-Ara4N to lipid A. The modified arabinose is attached to lipid A and is required for resistance to polymyxin and cationic antimicrobial peptides. This chain is Undecaprenyl phosphate-alpha-4-amino-4-deoxy-L-arabinose arabinosyl transferase 2, found in Proteus mirabilis (strain HI4320).